An 82-amino-acid polypeptide reads, in one-letter code: Delta-ctenitoxin-Pn1a (82 aa).

Positions 1–16 are cleaved as a signal peptide; it reads MKVAIVFLSLLVLAFA. Positions 17–34 are excised as a propeptide; the sequence is SESIEENREEFPVEESAR. 5 disulfide bridges follow: Cys35/Cys49, Cys42/Cys55, Cys46/Cys82, Cys48/Cys65, and Cys57/Cys63.

This sequence belongs to the neurotoxin 03 (Tx2) family. 05 subfamily. Expressed by the venom gland.

Its subcellular location is the secreted. In terms of biological role, this neurotoxin binds at site 3 of insect voltage-activated sodium channels (Nav) and prolongs evoked axonal action potentials by a slowing down of sodium current inactivation. The toxin also inhibits glutamate uptake from rat brain synaptosomes. It reversibly inhibits the N-methyl-D-aspartate (NMDA)-subtype of ionotropic glutamate receptor (GRIN). In addition, the toxin shows antinociceptive effect in all rat pain models tested (inflammatory, neuropathic and nociceptive). The antinociceptive effect is partially blocked when selective antagonists of both mu- and delta-opioid receptors are administered, revealing that the antinociceptive effect of the toxin involves both opioid and cannabinoid endogenous systems. In vivo, it is highly toxic to house fly (Musca domestica), toxic to cockroach, but has no effect when intracerebroventricularly injected into mice. The sequence is that of Delta-ctenitoxin-Pn1a from Phoneutria nigriventer (Brazilian armed spider).